The primary structure comprises 386 residues: NADPH-dependent alkenal/one oxidoreductase, chloroplastic (386 aa).

It belongs to the zinc-containing alcohol dehydrogenase family. Quinone oxidoreductase subfamily.

It is found in the plastid. Its subcellular location is the chloroplast. Its function is as follows. Reduces the double bond in short-chain unsaturated carbonyls. Acts preferentially on alpha,beta-unsaturated ketones rather on alpha,beta-unsaturated aldehydes. Has no activity with (E)-2-hexenal and (E)-2-pentenal. Contributes to detoxify stromal reactive carbonyls produced under oxidative stress. This Arabidopsis thaliana (Mouse-ear cress) protein is NADPH-dependent alkenal/one oxidoreductase, chloroplastic.